Here is a 231-residue protein sequence, read N- to C-terminus: Small ribosomal subunit protein uS3 (231 aa).

A KH type-2 domain is found at 39–108 (IKNYIKKRYK…EISISVLEVK (70 aa)).

This sequence belongs to the universal ribosomal protein uS3 family. Part of the 30S ribosomal subunit. Forms a tight complex with proteins S10 and S14.

Functionally, binds the lower part of the 30S subunit head. Binds mRNA in the 70S ribosome, positioning it for translation. This is Small ribosomal subunit protein uS3 from Aquifex pyrophilus.